The sequence spans 280 residues: Adenosylcobinamide-GDP ribazoletransferase (280 aa).

6 consecutive transmembrane segments (helical) span residues 44 to 64 (GVGV…LFVL), 69 to 89 (STPL…TGAF), 111 to 131 (LVIM…MLAL), 135 to 155 (VALL…ALFV), 189 to 209 (ISVA…ALVI), and 226 to 246 (ALLQ…AVMA).

This sequence belongs to the CobS family. It depends on Mg(2+) as a cofactor.

It localises to the cell inner membrane. It carries out the reaction alpha-ribazole + adenosylcob(III)inamide-GDP = adenosylcob(III)alamin + GMP + H(+). The enzyme catalyses alpha-ribazole 5'-phosphate + adenosylcob(III)inamide-GDP = adenosylcob(III)alamin 5'-phosphate + GMP + H(+). Its pathway is cofactor biosynthesis; adenosylcobalamin biosynthesis; adenosylcobalamin from cob(II)yrinate a,c-diamide: step 7/7. Joins adenosylcobinamide-GDP and alpha-ribazole to generate adenosylcobalamin (Ado-cobalamin). Also synthesizes adenosylcobalamin 5'-phosphate from adenosylcobinamide-GDP and alpha-ribazole 5'-phosphate. The protein is Adenosylcobinamide-GDP ribazoletransferase of Albidiferax ferrireducens (strain ATCC BAA-621 / DSM 15236 / T118) (Rhodoferax ferrireducens).